A 1025-amino-acid polypeptide reads, in one-letter code: Synapsin (1025 aa).

Disordered regions lie at residues 1 to 94, 439 to 784, 872 to 910, and 995 to 1025; these read MKRG…SRES, VCRP…NYGS, YDSN…KHSD, and DFSD…LDLK. Residues 34–52 show a composition bias toward pro residues; the sequence is TKPPVAGGPPNMPPPPAPG. Low complexity predominate over residues 454 to 463; that stretch reads SRSSVSSRAE. A compositionally biased stretch (pro residues) spans 472–492; sequence PTPPLPAGPRPAPMGGPPPIP. Composition is skewed to low complexity over residues 499–546 and 594–626; these read VGSI…SSVS and SETS…QFSF. A Phosphoserine modification is found at serine 539. Polar residues predominate over residues 651–673; the sequence is TTASSAVRPESSVSVSDSRNTDT. Positions 690–702 are enriched in basic and acidic residues; that stretch reads QQERVNPFDKEPS. Residues 703-725 show a composition bias toward low complexity; the sequence is KSGSAASIHTSSSSSISSSSISS. Positions 726–735 are enriched in polar residues; the sequence is RINRNGNAIQ. The segment covering 736–749 has biased composition (pro residues); sequence SPPPPAGPPPPPPT. A compositionally biased stretch (polar residues) spans 750 to 759; that stretch reads NVTAVGSNAN. The span at 760–772 shows a compositional bias: low complexity; sequence SSSGYRNSFSSSL. Positions 872–904 are enriched in polar residues; that stretch reads YDSNSIASQGEGLNNPSDLPSYTRPSYSRSESN. A compositionally biased stretch (low complexity) spans 995–1007; sequence DFSDSGSMSSIGS.

Belongs to the synapsin family. In terms of assembly, identified in a complex with Syt1 and nwk. In terms of tissue distribution, widely expressed in the embryonic and adult nervous system synaptic terminals.

It localises to the synapse. Its function is as follows. Plays a significant role in nervous system function, which is subtle at the cellular level but manifests itself in complex behavior. The sequence is that of Synapsin (Syn) from Drosophila melanogaster (Fruit fly).